We begin with the raw amino-acid sequence, 514 residues long: Serine--tRNA ligase, cytoplasmic (514 aa).

The residue at position 1 (M1) is an N-acetylmethionine. An interaction with tRNA region spans residues 9-61 (RVDKGGDPALIRETQEKRFKDPGLVDQLVKADSEWRRCRFRADNLNKLKNLCS). S241 is subject to Phosphoserine. T271 and R302 together coordinate L-serine. ATP contacts are provided by residues 302 to 304 (RQE) and 318 to 321 (VHQF). At K323 the chain carries N6-acetyllysine. L-serine is bound at residue E325. 391–394 (ELVS) contributes to the ATP binding site. N427 serves as a coordination point for L-serine. The interval 472–514 (KPAPIDQEPSKKQKKQHEGSKKKAAARDVTLENRLQNMEVTDA) is disordered. A compositionally biased stretch (basic and acidic residues) spans 479-502 (EPSKKQKKQHEGSKKKAAARDVTL). Residues 482–494 (KKQKKQHEGSKKK) carry the Nuclear localization signal motif. Over residues 504–514 (NRLQNMEVTDA) the composition is skewed to polar residues.

This sequence belongs to the class-II aminoacyl-tRNA synthetase family. Type-1 seryl-tRNA synthetase subfamily. As to quaternary structure, homodimer. The tRNA molecule may bind across the dimer. Interacts with SIRT2. Interacts with METTL6; interaction is required for the tRNA N(3)-methylcytidine methyltransferase activity of METTL6.

It localises to the cytoplasm. It is found in the nucleus. The catalysed reaction is tRNA(Ser) + L-serine + ATP = L-seryl-tRNA(Ser) + AMP + diphosphate + H(+). It catalyses the reaction tRNA(Sec) + L-serine + ATP = L-seryl-tRNA(Sec) + AMP + diphosphate + H(+). It participates in aminoacyl-tRNA biosynthesis; selenocysteinyl-tRNA(Sec) biosynthesis; L-seryl-tRNA(Sec) from L-serine and tRNA(Sec): step 1/1. Catalyzes the attachment of serine to tRNA(Ser) in a two-step reaction: serine is first activated by ATP to form Ser-AMP and then transferred to the acceptor end of tRNA(Ser). Is probably also able to aminoacylate tRNA(Sec) with serine, to form the misacylated tRNA L-seryl-tRNA(Sec), which will be further converted into selenocysteinyl-tRNA(Sec). In the nucleus, binds to the VEGFA core promoter and prevents MYC binding and transcriptional activation by MYC. Recruits SIRT2 to the VEGFA promoter, promoting deacetylation of histone H4 at 'Lys-16' (H4K16). Thereby, inhibits the production of VEGFA and sprouting angiogenesis mediated by VEGFA. This is Serine--tRNA ligase, cytoplasmic (SARS1) from Oryctolagus cuniculus (Rabbit).